A 270-amino-acid polypeptide reads, in one-letter code: ParA family protein MPN_688 (270 aa).

Belongs to the ParA family.

This chain is ParA family protein MPN_688, found in Mycoplasma pneumoniae (strain ATCC 29342 / M129 / Subtype 1) (Mycoplasmoides pneumoniae).